The following is a 366-amino-acid chain: Chorismate synthase (366 aa).

Residues Arg-48 and Arg-54 each coordinate NADP(+). FMN is bound by residues 125 to 127 (RSS), 238 to 239 (NA), Gly-278, 293 to 297 (KPTSS), and Arg-319.

It belongs to the chorismate synthase family. Homotetramer. It depends on FMNH2 as a cofactor.

The enzyme catalyses 5-O-(1-carboxyvinyl)-3-phosphoshikimate = chorismate + phosphate. Its pathway is metabolic intermediate biosynthesis; chorismate biosynthesis; chorismate from D-erythrose 4-phosphate and phosphoenolpyruvate: step 7/7. Catalyzes the anti-1,4-elimination of the C-3 phosphate and the C-6 proR hydrogen from 5-enolpyruvylshikimate-3-phosphate (EPSP) to yield chorismate, which is the branch point compound that serves as the starting substrate for the three terminal pathways of aromatic amino acid biosynthesis. This reaction introduces a second double bond into the aromatic ring system. The protein is Chorismate synthase of Paraburkholderia phytofirmans (strain DSM 17436 / LMG 22146 / PsJN) (Burkholderia phytofirmans).